The primary structure comprises 382 residues: MDSPAGYRIHDNIPLPGNLDQVDVHVTRDDDYRIHVLPDVDRAVDALLTELDGRRAVVITDDVVADLHEGRVSAELAARGQLIGRTAIRAGEKSKSLTTAFELIDWLAEVNLARRDVVIALGGGVVVDTVGFVASAYMRGVPYVNMPTTLLAQVDAGIGGKVAVDHSEAKNLVGAFYQPKAVISCLEHLRTLDTRQIRSGLAEVVKKAVIASPELFDYIEANADDLLACASPAIDVLVHAAGAIKTKLVGRDPYEIDLRRPLNFGHTTGHAVETVTNYGPVLHGEAVAFGMVVAVDVARARGLVVPEVADRVTALIRRLGLPVALEELGAVPRVDDVVAALLKIRQIRDGSLRFVLPVELGATVIAEDVTEEEVRAALVRLR.

NAD(+) is bound by residues 92 to 95, 124 to 128, 148 to 149, Lys-161, Lys-170, and 188 to 191; these read EKSK, GVVVD, TT, and HLRT. Zn(2+) contacts are provided by Glu-203, His-266, and His-283.

Belongs to the sugar phosphate cyclases superfamily. EVS family. Requires NAD(+) as cofactor. Co(2+) is required as a cofactor. It depends on Zn(2+) as a cofactor.

The catalysed reaction is D-sedoheptulose 7-phosphate = 2-epi-valiolone + phosphate. Catalyzes the conversion of sedoheptulose 7-phosphate to 2-epi-valiolone, which may serve as an alternative precursor for aminocyclitol biosynthesis. This Actinosynnema mirum (strain ATCC 29888 / DSM 43827 / JCM 3225 / NBRC 14064 / NCIMB 13271 / NRRL B-12336 / IMRU 3971 / 101) protein is 2-epi-valiolone synthase.